The sequence spans 85 residues: CRISPR-associated endoribonuclease Cas2 2 (85 aa).

Aspartate 8 contributes to the Mg(2+) binding site.

The protein belongs to the CRISPR-associated endoribonuclease Cas2 protein family. Homodimer, forms a heterotetramer with a Cas1 homodimer. Requires Mg(2+) as cofactor.

In terms of biological role, CRISPR (clustered regularly interspaced short palindromic repeat), is an adaptive immune system that provides protection against mobile genetic elements (viruses, transposable elements and conjugative plasmids). CRISPR clusters contain sequences complementary to antecedent mobile elements and target invading nucleic acids. CRISPR clusters are transcribed and processed into CRISPR RNA (crRNA). Functions as a ssRNA-specific endoribonuclease. Involved in the integration of spacer DNA into the CRISPR cassette. The chain is CRISPR-associated endoribonuclease Cas2 2 from Chloroflexus aurantiacus (strain ATCC 29366 / DSM 635 / J-10-fl).